The primary structure comprises 179 residues: Large ribosomal subunit protein uL5 (179 aa).

In terms of assembly, contacts the P site tRNA. Forms a bridge to the 30S subunit in the 70S ribosome. Part of the 50S ribosomal subunit. Part of the 5S rRNA/L5/L18 subcomplex; in this organism only 2 proteins, L5 and L18 have been shown to be part of the 5S rRNA subcomplex, unlike E.coli and T.thermophilus where L25 (TL5) is also found. Has been shown to bind 5S rRNA.

In terms of biological role, this is one of the proteins that bind and probably mediate the attachment of the 5S RNA into the large ribosomal subunit, where it forms part of the central protuberance. In the 70S ribosome it contacts protein S13 of the 30S subunit (bridge B1b), connecting the 2 subunits; this bridge is implicated in subunit movement. Contacts the P site tRNA; the 5S rRNA and some of its associated proteins might help stabilize positioning of ribosome-bound tRNAs. The sequence is that of Large ribosomal subunit protein uL5 (rplE) from Geobacillus stearothermophilus (Bacillus stearothermophilus).